We begin with the raw amino-acid sequence, 280 residues long: Pantothenate synthetase (280 aa).

32-39 (MGALHAGH) contacts ATP. Catalysis depends on His-39, which acts as the Proton donor. Gln-63 contacts (R)-pantoate. Gln-63 provides a ligand contact to beta-alanine. Position 149–152 (149–152 (GEKD)) interacts with ATP. Gln-155 contributes to the (R)-pantoate binding site. ATP is bound by residues Val-178 and 186–189 (MSSR).

This sequence belongs to the pantothenate synthetase family. As to quaternary structure, homodimer.

It localises to the cytoplasm. The enzyme catalyses (R)-pantoate + beta-alanine + ATP = (R)-pantothenate + AMP + diphosphate + H(+). It functions in the pathway cofactor biosynthesis; (R)-pantothenate biosynthesis; (R)-pantothenate from (R)-pantoate and beta-alanine: step 1/1. Catalyzes the condensation of pantoate with beta-alanine in an ATP-dependent reaction via a pantoyl-adenylate intermediate. The polypeptide is Pantothenate synthetase (Ruegeria sp. (strain TM1040) (Silicibacter sp.)).